Consider the following 349-residue polypeptide: Phosphoribosylformylglycinamidine cyclo-ligase (349 aa).

This sequence belongs to the AIR synthase family.

It is found in the cytoplasm. The enzyme catalyses 2-formamido-N(1)-(5-O-phospho-beta-D-ribosyl)acetamidine + ATP = 5-amino-1-(5-phospho-beta-D-ribosyl)imidazole + ADP + phosphate + H(+). The protein operates within purine metabolism; IMP biosynthesis via de novo pathway; 5-amino-1-(5-phospho-D-ribosyl)imidazole from N(2)-formyl-N(1)-(5-phospho-D-ribosyl)glycinamide: step 2/2. The polypeptide is Phosphoribosylformylglycinamidine cyclo-ligase (Bordetella parapertussis (strain 12822 / ATCC BAA-587 / NCTC 13253)).